The sequence spans 146 residues: Small ribosomal subunit protein uS13A (146 aa).

The residue at position 2 (serine 2) is an N-acetylserine. Residue lysine 36 forms a Glycyl lysine isopeptide (Lys-Gly) (interchain with G-Cter in ubiquitin) linkage. An N6-methyllysine; by RKM1 modification is found at lysine 48. Glycyl lysine isopeptide (Lys-Gly) (interchain with G-Cter in ubiquitin) cross-links involve residues lysine 49, lysine 80, and lysine 96.

This sequence belongs to the universal ribosomal protein uS13 family. In terms of assembly, component of the small ribosomal subunit (SSU). Mature yeast ribosomes consist of a small (40S) and a large (60S) subunit. The 40S small subunit contains 1 molecule of ribosomal RNA (18S rRNA) and 33 different proteins (encoded by 57 genes). The large 60S subunit contains 3 rRNA molecules (25S, 5.8S and 5S rRNA) and 46 different proteins (encoded by 81 genes). N-terminally acetylated by acetyltransferase NatA.

The protein resides in the cytoplasm. In terms of biological role, component of the ribosome, a large ribonucleoprotein complex responsible for the synthesis of proteins in the cell. The small ribosomal subunit (SSU) binds messenger RNAs (mRNAs) and translates the encoded message by selecting cognate aminoacyl-transfer RNA (tRNA) molecules. The large subunit (LSU) contains the ribosomal catalytic site termed the peptidyl transferase center (PTC), which catalyzes the formation of peptide bonds, thereby polymerizing the amino acids delivered by tRNAs into a polypeptide chain. The nascent polypeptides leave the ribosome through a tunnel in the LSU and interact with protein factors that function in enzymatic processing, targeting, and the membrane insertion of nascent chains at the exit of the ribosomal tunnel. The polypeptide is Small ribosomal subunit protein uS13A (Saccharomyces cerevisiae (strain ATCC 204508 / S288c) (Baker's yeast)).